We begin with the raw amino-acid sequence, 181 residues long: MSLEQHYSSILTQLGEDVNREGLLDTPKRAAKAMKYLCRGYQQSLEEVVNGALFSSDNSEMVLVKDIELYSLCEHHLLPFIGKAHVAYIPNGKVLGLSKVARIVDMYARRLQIQENMSRQIAEAVQQVTGALGVAVVIQAQHMCMMMRGVEKQNSSMVTSVMLGEFRDNAATRSEFLSLIR.

This sequence belongs to the GTP cyclohydrolase I family. As to quaternary structure, homomer.

The catalysed reaction is GTP + H2O = 7,8-dihydroneopterin 3'-triphosphate + formate + H(+). The protein operates within cofactor biosynthesis; 7,8-dihydroneopterin triphosphate biosynthesis; 7,8-dihydroneopterin triphosphate from GTP: step 1/1. The polypeptide is GTP cyclohydrolase 1 2 (folE2) (Pseudomonas aeruginosa (strain ATCC 15692 / DSM 22644 / CIP 104116 / JCM 14847 / LMG 12228 / 1C / PRS 101 / PAO1)).